We begin with the raw amino-acid sequence, 166 residues long: MASADEKVVEEKASVISSLLDKAKGFFAEKLANIPTPEATVDDVDFKGVTRDGVDYHAKVSVKNPYSQSIPICQISYILKSATRTIASGTIPDPGSLVGSGTTVLDVPVKVAYSIAVSLMKDMCTDWDIDYQLDIGLTFDIPVVGDITIPVSTQGEIKLPSLRDFF.

It belongs to the LEA type 2 family.

The polypeptide is Desiccation-related protein At2g46140 (Arabidopsis thaliana (Mouse-ear cress)).